Consider the following 410-residue polypeptide: Retrovirus-related Pol polyprotein from type-1 retrotransposable element R1 2 (410 aa).

Residues 1-118 (GCPQGSIGGP…SCFRYLGVNV (118 aa)) form the Reverse transcriptase domain. The segment at 254–410 (SSVIKLERLV…RLNLELDVNG (157 aa)) is nucleic acid-binding endonuclease.

The catalysed reaction is DNA(n) + a 2'-deoxyribonucleoside 5'-triphosphate = DNA(n+1) + diphosphate. This is Retrovirus-related Pol polyprotein from type-1 retrotransposable element R1 2 from Nasonia vitripennis (Parasitic wasp).